Reading from the N-terminus, the 680-residue chain is Leucine-rich repeat and calponin homology domain-containing protein 4 (680 aa).

Low complexity predominate over residues 1-22; that stretch reads MAAAVAGPLAAGGEEAAASVSL. The tract at residues 1 to 35 is disordered; it reads MAAAVAGPLAAGGEEAAASVSLPGSPGLPGSRSAE. 9 LRR repeats span residues 41 to 64, 67 to 90, 92 to 113, 114 to 136, 138 to 158, 159 to 181, 182 to 204, 206 to 226, and 227 to 250; these read AVAT…AARS, LSDI…ACQL, SLEG…LGNL, TALT…ICQL, LRVL…ISTL, GSLR…LCSL, RSLR…LGDL, LVRL…FCRL, and RHLQ…CLKG. Phosphoserine is present on residues Ser-279, Ser-281, Ser-304, Ser-307, Ser-309, and Ser-313. A disordered region spans residues 329–528; sequence SELARDPRGP…PSSPESVLRP (200 aa). Residues 330–345 are compositionally biased toward basic and acidic residues; it reads ELARDPRGPRQPREDG. Acidic residues predominate over residues 346 to 355; that stretch reads AGDGDLEQID. Basic and acidic residues-rich tracts occupy residues 357–371 and 385–418; these read IDSH…RSAA and DVEK…ERKQ. The residue at position 432 (Ser-432) is a Phosphoserine. Low complexity-rich tracts occupy residues 440-453 and 510-528; these read AAGA…TQAT and RSSS…VLRP. 5 positions are modified to phosphoserine: Ser-511, Ser-513, Ser-517, Ser-521, and Ser-586. One can recognise a Calponin-homology (CH) domain in the interval 531-644; that stretch reads FPQEKELISQ…VLEAVILVGG (114 aa). Residues 655-675 form a helical membrane-spanning segment; the sequence is GLGGFLLFYVVFMLLLYVVYT.

In terms of tissue distribution, widely expressed across tissues, with the most abundant expression in spleen, testes, thymus, intestine, and blood. Expressed in macrophages.

It localises to the cell membrane. In terms of biological role, accessory protein that regulates signaling by multiple TLRs, acting as a broad-spanning regulator of the innate immune response. In macrophages, binds LPS and promotes proper docking of LPS in lipid raft membrane. May be required for lipid raft maintenance. The polypeptide is Leucine-rich repeat and calponin homology domain-containing protein 4 (Lrch4) (Mus musculus (Mouse)).